Reading from the N-terminus, the 511-residue chain is 2'-acyl-2-O-sulfo-trehalose (hydroxy)phthioceranyltransferase PapA1 (511 aa).

It belongs to the PapA acyltransferase family.

It carries out the reaction a (hydroxy)phthioceranyl-[(hydroxy)phthioceranic acid synthase] + 2'-palmitoyl/stearoyl-2-O-sulfo-alpha,alpha-trehalose = a 3'-(hydroxy)phthioceranyl-2'-palmitoyl/stearoyl-2-O-sulfo-alpha,alpha-trehalose + holo-[(hydroxy)phthioceranic acid synthase].. Its function is as follows. Catalyzes the acylation of trehalose-2-sulfate-2'-palmitate (SL659) by adding the (hydroxy)phthioceranoyl group at the 3'-position to yield the diacylated intermediate 2-palmitoyl-3-(C43)-phthioceranyl-alpha, alpha'-D-trehalose-2'-sulfate (SL1278). The chain is 2'-acyl-2-O-sulfo-trehalose (hydroxy)phthioceranyltransferase PapA1 (papA1) from Mycobacterium bovis (strain BCG / Pasteur 1173P2).